The primary structure comprises 98 residues: MAQGKQKFKAQRPGGAKKHQNKPKGLKKGGRIIAPKKAQVVQQQKLKKGLEVAIRNKIEHEVTQKASTSLHKKLSVLKTPAQKSGTAGAPKPAAGPSK.

Residues 1–30 are compositionally biased toward basic residues; sequence MAQGKQKFKAQRPGGAKKHQNKPKGLKKGG. Disordered stretches follow at residues 1–38 and 63–98; these read MAQG…PKKA and TQKA…GPSK. Residues 83-98 show a composition bias toward low complexity; it reads KSGTAGAPKPAAGPSK.

It belongs to the UPF0390 family.

The chain is UPF0390 protein zgc136864 from Danio rerio (Zebrafish).